A 1019-amino-acid polypeptide reads, in one-letter code: Katanin p80 WD40 repeat-containing subunit B1 homolog KTN80.1 (1019 aa).

WD repeat units lie at residues 13-53, 56-95, 98-137, 140-181, 183-221, 224-264, and 266-303; these read AHSG…SPMS, GHTS…MVRA, GHRS…CIQT, GHTR…HEFK, HEGP…LIGT, PEAT…DGVD, and GWST…LEPY. The DWD box motif lies at 114-130; it reads FLASGSSDTNLRVWDTR. Disordered regions lie at residues 388–424, 455–474, 517–581, and 607–652; these read FGPA…TKSG, KSGL…LSEQ, IHRS…GSRE, and RGEK…RARS. Residues 465–474 are compositionally biased toward polar residues; the sequence is QTQNAFLSEQ. The segment covering 553–572 has biased composition (basic and acidic residues); it reads IPSKTERVLSREKPGDEQKN. The segment covering 614 to 628 has biased composition (polar residues); the sequence is TEGASTTIEQNNNAV.

The protein belongs to the WD repeat KATNB1 family. In terms of assembly, component of KTN80-KTN1 complexes composed of a hexamer of KTN1-KTN80 heterodimers that sense microtubule (MT) geometry to confer precise MT severing. Interacts directly with AAA1/KTN1 and KTN80.3, and weakly with KTN80.4. Expressed at low levels in siliques, flowers, leaves, stems and roots.

The protein localises to the cytoplasm. It is found in the cytoskeleton. Its function is as follows. May participate in a complex which severs microtubules in an ATP-dependent manner. Microtubule severing may promote rapid reorganization of cellular microtubule arrays. Confers precision to microtubule (MT) severing by specific targeting of KTN1 to MT cleavage sites such as crossover or branching nucleation sites. Together with other KTN80s, regulates cell elongation by modulating MT organization. The polypeptide is Katanin p80 WD40 repeat-containing subunit B1 homolog KTN80.1 (Arabidopsis thaliana (Mouse-ear cress)).